A 655-amino-acid chain; its full sequence is Large subunit GTPase 1 homolog (655 aa).

The disordered stretch occupies residues 1–31 (MGRRRAPGGGSLGRVLIRHQTQRSRSHRHTD). Residues 16–28 (LIRHQTQRSRSHR) are compositionally biased toward basic residues. Phosphoserine is present on residues S93 and S97. The CP-type G domain maps to 164-441 (WRQLWRVIER…LCDCPGLVMP (278 aa)). A GTP-binding site is contributed by 212–215 (NKAD). Position 252 is a phosphoserine (S252). The disordered stretch occupies residues 253-359 (KDEVNSVAGE…ENSQMSNKSH (107 aa)). Residues 288–327 (EESESDDDDSEYEDCQEDEEEDWQTCSEEDSNPEEGQEEG) are compositionally biased toward acidic residues. The segment covering 328–339 (GCDRDQKEHGPE) has biased composition (basic and acidic residues). Residues 344-359 (QSRASPENSQMSNKSH) are compositionally biased toward polar residues. GTP-binding positions include 390–397 (GYPNVGKS) and 434–437 (DCPG). The disordered stretch occupies residues 625 to 655 (SAENVPGKPWKKHGNRNKKEKSRRLYRHLDV). Residues 633-655 (PWKKHGNRNKKEKSRRLYRHLDV) show a composition bias toward basic residues.

It belongs to the TRAFAC class YlqF/YawG GTPase family. LSG1 subfamily.

The protein localises to the cytoplasm. It localises to the endoplasmic reticulum. It is found in the nucleus. Its subcellular location is the cajal body. The enzyme catalyses GTP + H2O = GDP + phosphate + H(+). Its function is as follows. Functions as a GTPase. May act by mediating the release of NMD3 from the 60S ribosomal subunit after export into the cytoplasm during the 60S ribosomal subunit maturation. This chain is Large subunit GTPase 1 homolog, found in Rattus norvegicus (Rat).